Here is a 484-residue protein sequence, read N- to C-terminus: Palmitoyltransferase ZDHHC1 (484 aa).

Polar residues-rich tracts occupy residues 1–11 and 19–34; these read MNICNKPSNKT and TAPSQDSGPSPELQGQ. Residues 1-38 form a disordered region; it reads MNICNKPSNKTAPEKSVWTAPSQDSGPSPELQGQRSRR. The Cytoplasmic segment spans residues 1-49; sequence MNICNKPSNKTAPEKSVWTAPSQDSGPSPELQGQRSRRNGWSWPPHPLQ. Residues 1–268 form a mediates interaction with STING1 region; sequence MNICNKPSNK…GHLLCFHIYL (268 aa). Residues 50–70 traverse the membrane as a helical segment; sequence IVAWLLYLFFAVIGFGVLVPL. The Lumenal portion of the chain corresponds to 71 to 74; that stretch reads LPHH. A helical transmembrane segment spans residues 75–95; the sequence is WVPAGYACMGAIFAGHLVVHL. Residues 96-182 lie on the Cytoplasmic side of the membrane; that stretch reads TAVSIDPADA…YRLFLHSVAS (87 aa). The 51-residue stretch at 131-181 folds into the DHHC domain; sequence LHCNLCDVDVSARSKHCSACNKCVCGFDHHCKWLNNCVGERNYRLFLHSVA. C161 functions as the S-palmitoyl cysteine intermediate in the catalytic mechanism. Residues 183–203 traverse the membrane as a helical segment; that stretch reads ALLGVLLLVLVATYVFVEFFV. Over 204-238 the chain is Lumenal; that stretch reads NPMRLRTNQHFEVLKNHTDVWFVFLPAAPVETQAP. Residues 239–259 traverse the membrane as a helical segment; the sequence is AILALAALLILLGLLSTALLG. Over 260 to 484 the chain is Cytoplasmic; the sequence is HLLCFHIYLM…GTPGGGDGLP (225 aa). Disordered stretches follow at residues 341–415 and 444–484; these read TQGQ…VHAG and LGAP…DGLP. Over residues 364 to 374 the composition is skewed to basic residues; sequence PQKKRKRRVYR. The span at 380 to 392 shows a compositional bias: basic and acidic residues; that stretch reads VLDRELPLPRLRE. Residues 395-415 show a composition bias toward low complexity; it reads TPSRRSSSSSDSTSASPVHAG. Over residues 475–484 the composition is skewed to gly residues; the sequence is GTPGGGDGLP.

It belongs to the DHHC palmitoyltransferase family. As to quaternary structure, interacts with STING1; ZDHHC1 constitutively interacts with STING1 and in presence of DNA viruses activates it by promoting its cGAMP-induced oligomerization and the recruitment of downstream signaling components. Expressed at high levels in fetal lung and heart. Expressed at lower levels in fetal liver and brain. Also detected in adult islet cells of pancreas, Leydig cells of testis, retina and molecular layer of cerebellum.

The protein localises to the endosome membrane. Its subcellular location is the endoplasmic reticulum membrane. It is found in the golgi apparatus. The catalysed reaction is L-cysteinyl-[protein] + hexadecanoyl-CoA = S-hexadecanoyl-L-cysteinyl-[protein] + CoA. Functionally, palmitoyltransferase that catalyzes the addition of palmitate onto various protein substrates, such as NCDN and NLRP3. Has a palmitoyltransferase activity toward NCDN and regulates NCDN association with endosome membranes through this palmitoylation. Acts as an activator of the NLRP3 inflammasome by mediating palmitoylation of 'Cys-130' and 'Cys-958' of NLRP3, thereby promoting NLRP3 phosphorylation and activation by NEK7. In terms of biological role, also has a palmitoyltransferase activity-independent function in DNA virus-triggered and CGAS-mediated innate immune response. Functions as an activator of STING1 by promoting its cGAMP-induced oligomerization and the recruitment of downstream signaling components. This is Palmitoyltransferase ZDHHC1 from Mus musculus (Mouse).